Here is a 131-residue protein sequence, read N- to C-terminus: NADH-quinone oxidoreductase subunit I 2 (131 aa).

4Fe-4S ferredoxin-type domains follow at residues 42–71 (LKVS…VEAG) and 81–110 (ERYE…MTGE). Residues cysteine 51, cysteine 54, cysteine 57, cysteine 61, cysteine 90, cysteine 93, cysteine 96, and cysteine 100 each coordinate [4Fe-4S] cluster.

Belongs to the complex I 23 kDa subunit family. NDH-1 is composed of 14 different subunits. Subunits NuoA, H, J, K, L, M, N constitute the membrane sector of the complex. [4Fe-4S] cluster is required as a cofactor.

The protein localises to the cell inner membrane. The catalysed reaction is a quinone + NADH + 5 H(+)(in) = a quinol + NAD(+) + 4 H(+)(out). Functionally, NDH-1 shuttles electrons from NADH, via FMN and iron-sulfur (Fe-S) centers, to quinones in the respiratory chain. The immediate electron acceptor for the enzyme in this species is believed to be ubiquinone. Couples the redox reaction to proton translocation (for every two electrons transferred, four hydrogen ions are translocated across the cytoplasmic membrane), and thus conserves the redox energy in a proton gradient. The polypeptide is NADH-quinone oxidoreductase subunit I 2 (Geobacter metallireducens (strain ATCC 53774 / DSM 7210 / GS-15)).